Reading from the N-terminus, the 29-residue chain is Photosystem I reaction center subunit XII (29 aa).

A helical membrane pass occupies residues 7–24 (FVALLLALVPAVLAYRLG).

The protein belongs to the PsaM family.

Its subcellular location is the cellular thylakoid membrane. The sequence is that of Photosystem I reaction center subunit XII from Synechococcus sp. (strain ATCC 27144 / PCC 6301 / SAUG 1402/1) (Anacystis nidulans).